The following is a 575-amino-acid chain: Proline--tRNA ligase (575 aa).

Belongs to the class-II aminoacyl-tRNA synthetase family. ProS type 1 subfamily. As to quaternary structure, homodimer.

It localises to the cytoplasm. The enzyme catalyses tRNA(Pro) + L-proline + ATP = L-prolyl-tRNA(Pro) + AMP + diphosphate. Catalyzes the attachment of proline to tRNA(Pro) in a two-step reaction: proline is first activated by ATP to form Pro-AMP and then transferred to the acceptor end of tRNA(Pro). As ProRS can inadvertently accommodate and process non-cognate amino acids such as alanine and cysteine, to avoid such errors it has two additional distinct editing activities against alanine. One activity is designated as 'pretransfer' editing and involves the tRNA(Pro)-independent hydrolysis of activated Ala-AMP. The other activity is designated 'posttransfer' editing and involves deacylation of mischarged Ala-tRNA(Pro). The misacylated Cys-tRNA(Pro) is not edited by ProRS. The protein is Proline--tRNA ligase of Pseudothermotoga lettingae (strain ATCC BAA-301 / DSM 14385 / NBRC 107922 / TMO) (Thermotoga lettingae).